A 337-amino-acid chain; its full sequence is WRKY transcription factor 23 (337 aa).

The tract at residues 100–160 (INPPATPNSS…KNNQKRQREA (61 aa)) is disordered. The span at 106–118 (PNSSSISSASSEA) shows a compositional bias: low complexity. Basic residues predominate over residues 142–155 (HTKKQLKAKKNNQK). Positions 168–233 (SEVDHLEDGY…YEGQHTHISP (66 aa)) form a DNA-binding region, WRKY.

It belongs to the WRKY group II-c family.

It localises to the nucleus. In terms of biological role, transcription factor. Interacts specifically with the W box (5'-(T)TGAC[CT]-3'), a frequently occurring elicitor-responsive cis-acting element. The chain is WRKY transcription factor 23 (WRKY23) from Arabidopsis thaliana (Mouse-ear cress).